Reading from the N-terminus, the 428-residue chain is MIIGIDDTDSNEGMCTTYLGALLLEELQEYGNIETLPLLVRLNPTIPYKTRGNAAVALKLKTDCPEKVIAHVTSRIEELARMECEKTNPGAVFIQDKDYGRLRPVLMRFLEEAVRDVIEIKKAKDLISILGIASKGFKNGRGLIGALAACGAMLDQDGLDFTFEHLAYRQKDRWGTPREVDKKSFFEADKETYPETWDTVDLTNRLVVCVPHSADPVLFGIRGESPEIVNKAASLIRAEPVERFAVYRTNQGTDMHLLPAQNIAETRDMHSYRLEGTVSAAPKTLEGGHVIFAVRDREGAEIDCAAFEPTKNFRSLIRKLVPGDLICLSGSVTSGTLNIEKIEIKSLAPVYREENPICPECGKHMKSSGKGQGFRCKKCGTDSPSKVRFEGDRDLDPGLYEVPPCARRHLAKPLVREERRDMRLNPAR.

It belongs to the TiaS family.

Its subcellular location is the cytoplasm. It carries out the reaction cytidine(34) in tRNA(Ile2) + agmatine + ATP + H2O = 2-agmatinylcytidine(34) in tRNA(Ile2) + AMP + 2 phosphate + 2 H(+). ATP-dependent agmatine transferase that catalyzes the formation of 2-agmatinylcytidine (agm2C) at the wobble position (C34) of tRNA(Ile2), converting the codon specificity from AUG to AUA. The protein is tRNA(Ile2) 2-agmatinylcytidine synthetase TiaS of Methanosarcina mazei (strain ATCC BAA-159 / DSM 3647 / Goe1 / Go1 / JCM 11833 / OCM 88) (Methanosarcina frisia).